Here is a 181-residue protein sequence, read N- to C-terminus: Large ribosomal subunit protein uL5 (181 aa).

It belongs to the universal ribosomal protein uL5 family. Part of the 50S ribosomal subunit; part of the 5S rRNA/L5/L18/L25 subcomplex. Contacts the 5S rRNA and the P site tRNA. Forms a bridge to the 30S subunit in the 70S ribosome.

This is one of the proteins that bind and probably mediate the attachment of the 5S RNA into the large ribosomal subunit, where it forms part of the central protuberance. In the 70S ribosome it contacts protein S13 of the 30S subunit (bridge B1b), connecting the 2 subunits; this bridge is implicated in subunit movement. Contacts the P site tRNA; the 5S rRNA and some of its associated proteins might help stabilize positioning of ribosome-bound tRNAs. This Campylobacter jejuni subsp. jejuni serotype O:6 (strain 81116 / NCTC 11828) protein is Large ribosomal subunit protein uL5.